The sequence spans 496 residues: Bifunctional protein HldE (496 aa).

The ribokinase stretch occupies residues 1–331 (MDPTPALAEI…AAVHQEEVSA (331 aa)). 206–209 (NRKE) is an ATP binding site. The active site involves Asp276. Residues 358–496 (FTNGCFDLLH…GGSRRSGDTL (139 aa)) form a cytidylyltransferase region.

The protein in the N-terminal section; belongs to the carbohydrate kinase PfkB family. In the C-terminal section; belongs to the cytidylyltransferase family. In terms of assembly, homodimer.

The catalysed reaction is D-glycero-beta-D-manno-heptose 7-phosphate + ATP = D-glycero-beta-D-manno-heptose 1,7-bisphosphate + ADP + H(+). It catalyses the reaction D-glycero-beta-D-manno-heptose 1-phosphate + ATP + H(+) = ADP-D-glycero-beta-D-manno-heptose + diphosphate. It functions in the pathway nucleotide-sugar biosynthesis; ADP-L-glycero-beta-D-manno-heptose biosynthesis; ADP-L-glycero-beta-D-manno-heptose from D-glycero-beta-D-manno-heptose 7-phosphate: step 1/4. Its pathway is nucleotide-sugar biosynthesis; ADP-L-glycero-beta-D-manno-heptose biosynthesis; ADP-L-glycero-beta-D-manno-heptose from D-glycero-beta-D-manno-heptose 7-phosphate: step 3/4. Its function is as follows. Catalyzes the phosphorylation of D-glycero-D-manno-heptose 7-phosphate at the C-1 position to selectively form D-glycero-beta-D-manno-heptose-1,7-bisphosphate. Functionally, catalyzes the ADP transfer from ATP to D-glycero-beta-D-manno-heptose 1-phosphate, yielding ADP-D-glycero-beta-D-manno-heptose. This Rhodospirillum rubrum (strain ATCC 11170 / ATH 1.1.1 / DSM 467 / LMG 4362 / NCIMB 8255 / S1) protein is Bifunctional protein HldE.